Consider the following 98-residue polypeptide: NADH-ubiquinone oxidoreductase chain 4L (98 aa).

Transmembrane regions (helical) follow at residues 2-22 (PPIFANIILAFATAFLGTLIF), 29-49 (SLLCLEGMMLSMFILSTLIIL), and 61-81 (ILLLVFAACEAAIGLALLVMV).

Belongs to the complex I subunit 4L family. As to quaternary structure, core subunit of respiratory chain NADH dehydrogenase (Complex I) which is composed of 45 different subunits.

The protein resides in the mitochondrion inner membrane. The catalysed reaction is a ubiquinone + NADH + 5 H(+)(in) = a ubiquinol + NAD(+) + 4 H(+)(out). Core subunit of the mitochondrial membrane respiratory chain NADH dehydrogenase (Complex I) which catalyzes electron transfer from NADH through the respiratory chain, using ubiquinone as an electron acceptor. Part of the enzyme membrane arm which is embedded in the lipid bilayer and involved in proton translocation. The polypeptide is NADH-ubiquinone oxidoreductase chain 4L (MT-ND4L) (Avahi unicolor (Sambirano woolly lemur)).